The sequence spans 260 residues: Ribosomal RNA small subunit methyltransferase G (260 aa).

3 residues coordinate S-adenosyl-L-methionine: Gly-111, Phe-116, and Arg-181.

It belongs to the methyltransferase superfamily. RNA methyltransferase RsmG family.

It is found in the cytoplasm. It carries out the reaction guanosine(527) in 16S rRNA + S-adenosyl-L-methionine = N(7)-methylguanosine(527) in 16S rRNA + S-adenosyl-L-homocysteine. Its function is as follows. Specifically methylates the N7 position of guanine in position 527 of 16S rRNA. This chain is Ribosomal RNA small subunit methyltransferase G, found in Nitrobacter hamburgensis (strain DSM 10229 / NCIMB 13809 / X14).